The primary structure comprises 148 residues: Cysteine-rich venom protein VAR6 (148 aa).

A signal peptide spans 1 to 22 (MILLKLYLTLAAILCQSRGTTS). The SCP domain maps to 41 to 140 (NKHNDLRRTV…AGVMVGHYTQ (100 aa)).

This sequence belongs to the CRISP family. Contains 8 disulfide bonds. In terms of tissue distribution, expressed by the venom gland.

The protein resides in the secreted. In terms of biological role, blocks ryanodine receptors, and potassium channels. The sequence is that of Cysteine-rich venom protein VAR6 from Varanus acanthurus (Ridge-tailed monitor).